Here is a 487-residue protein sequence, read N- to C-terminus: Glutamate--tRNA ligase (487 aa).

Positions 10–20 (PSPTGYMHVGN) match the 'HIGH' region motif. Positions 251–255 (KLSKR) match the 'KMSKS' region motif. An ATP-binding site is contributed by K254.

It belongs to the class-I aminoacyl-tRNA synthetase family. Glutamate--tRNA ligase type 1 subfamily. In terms of assembly, monomer.

It is found in the cytoplasm. The enzyme catalyses tRNA(Glu) + L-glutamate + ATP = L-glutamyl-tRNA(Glu) + AMP + diphosphate. In terms of biological role, catalyzes the attachment of glutamate to tRNA(Glu) in a two-step reaction: glutamate is first activated by ATP to form Glu-AMP and then transferred to the acceptor end of tRNA(Glu). The chain is Glutamate--tRNA ligase from Clostridium kluyveri (strain ATCC 8527 / DSM 555 / NBRC 12016 / NCIMB 10680 / K1).